Consider the following 356-residue polypeptide: Carbohydrate sulfotransferase 10 (356 aa).

Topologically, residues 1–6 (MHHQWL) are cytoplasmic. The helical; Signal-anchor for type II membrane protein transmembrane segment at 7-27 (LLAACFWVIFMFMVASKFITL) threads the bilayer. The Lumenal segment spans residues 28–356 (TFKDPDGYSA…GYQKPDFLLN (329 aa)). Asparagine 99 is a glycosylation site (N-linked (GlcNAc...) asparagine). 3'-phosphoadenylyl sulfate-binding positions include 127 to 133 (PKVGNTQ) and 189 to 197 (RDPFERLIS). Asparagine 228 and asparagine 316 each carry an N-linked (GlcNAc...) asparagine glycan.

Belongs to the sulfotransferase 2 family. In terms of tissue distribution, in myogenic progenitors, it is ubiquitously expressed.

It is found in the golgi apparatus membrane. It catalyses the reaction 3-O-{beta-D-GlcA-(1-&gt;[3)-alpha-D-Xyl-(1-&gt;3)-beta-D-GlcA-(1-&gt;](n)-4)-beta-D-Xyl-(1-&gt;4)-Rib-ol-P-Rib-ol-P-3-beta-D-GalNAc-(1-&gt;3)-beta-D-GlcNAc-(1-&gt;4)-O-6-P-alpha-D-Man}-L-Thr-[protein] + 3'-phosphoadenylyl sulfate = 3-O-{O-3-S-beta-D-GlcA-(1-&gt;[3)-alpha-D-Xyl-(1-&gt;3)-beta-D-GlcA-(1-&gt;](n)-4)-beta-D-Xyl-(1-&gt;4)-Rib-ol-P-Rib-ol-P-3-beta-D-GalNAc-(1-&gt;3)-beta-D-GlcNAc-(1-&gt;4)-O-6-P-alpha-D-Man}-L-Thr-[protein] + adenosine 3',5'-bisphosphate + H(+). It carries out the reaction 17beta-estradiol 3-O-(beta-D-glucuronate) + 3'-phosphoadenylyl sulfate = 17beta-estradiol 3-O-(3-sulfo-beta-D-glucuronate) + adenosine 3',5'-bisphosphate + H(+). The enzyme catalyses 17beta-estradiol 3-O-(beta-D-glucuronate) 17-sulfate + 3'-phosphoadenylyl sulfate = 17beta-estradiol 3-O-(3-sulfo-beta-D-glucuronate) 17-sulfate + adenosine 3',5'-bisphosphate + H(+). The catalysed reaction is 17beta-estradiol 17-O-(beta-D-glucuronate) + 3'-phosphoadenylyl sulfate = 17beta-estradiol 17-O-(3-sulfo-beta-D-glucuronate) + adenosine 3',5'-bisphosphate + H(+). It catalyses the reaction 16alpha,17beta-estriol 3-O-(beta-D-glucuronate) + 3'-phosphoadenylyl sulfate = 16alpha,17beta-estriol 3-O-(3-sulfo-beta-D-glucuronate) + adenosine 3',5'-bisphosphate + H(+). It carries out the reaction 16alpha,17beta-estriol 16-O-(beta-D-glucuronate) + 3'-phosphoadenylyl sulfate = 16alpha,17beta-estriol 16-O-(3-sulfo-beta-D-glucuronate) + adenosine 3',5'-bisphosphate + H(+). The enzyme catalyses 16alpha,17beta-estriol 17-O-(beta-D-glucuronate) + 3'-phosphoadenylyl sulfate = 16alpha,17beta-estriol 17-O-(3-sulfo-beta-D-glucuronate) + adenosine 3',5'-bisphosphate + H(+). The catalysed reaction is estrone 3-O-(beta-D-glucuronate) + 3'-phosphoadenylyl sulfate = estrone 3-O-(3-sulfo-beta-D-glucuronate) + adenosine 3',5'-bisphosphate + H(+). It catalyses the reaction 3alpha,20alpha-dihydroxy-5beta-pregnane 3-O-(beta-D-glucuronate) + 3'-phosphoadenylyl sulfate = 3alpha,20alpha-dihydroxy-5beta-pregnane 3-O-(3-sulfo-beta-D-glucuronate) + adenosine 3',5'-bisphosphate + H(+). It carries out the reaction testosterone 17-O-(beta-D-glucuronate) + 3'-phosphoadenylyl sulfate = testosterone 17-O-(3-sulfo-beta-D-glucuronate) + adenosine 3',5'-bisphosphate + H(+). The enzyme catalyses 3beta-androst-5-en-17-one 3-O-(beta-D-glucuronate) + 3'-phosphoadenylyl sulfate = 3beta-androst-5-en-17-one 3-O-(3-sulfo-beta-D-glucuronate) + adenosine 3',5'-bisphosphate + H(+). The catalysed reaction is 3alpha,17alpha-dihydroxy-5beta-androstane-11-one-17beta-carboxylate 3-O-(beta-D-glucuronate) + 3'-phosphoadenylyl sulfate = 3alpha,17alpha-dihydroxy-5beta-androstane-11-one-17beta-carboxylate 3-O-(3-sulfo-beta-D-glucuronate) + adenosine 3',5'-bisphosphate + H(+). It catalyses the reaction 3alpha-hydroxyetiocholan-17-one 3-O-(beta-D-glucuronate) + 3'-phosphoadenylyl sulfate = 3alpha-hydroxyetiocholan-17-one 3-O-(3-sulfo-beta-D-glucuronate) + adenosine 3',5'-bisphosphate + H(+). It participates in steroid metabolism. It functions in the pathway protein modification; carbohydrate sulfation. In terms of biological role, catalyzes the transfer of sulfate from 3'-phosphoadenylyl sulfate (PAPS) to position 3 of terminal glucuronic acid of both protein- and lipid-linked oligosaccharides. Participates in biosynthesis of HNK-1 carbohydrate structure 3-O-sulfo-beta-D-GlcA-(1-&gt;3)-beta-D-Gal-(1-&gt;4)-D-GlcNAc-R, a sulfated glucuronyl-lactosaminyl residue carried by many neural recognition molecules, which is involved in cell interactions during ontogenetic development and in synaptic plasticity in the adult. May be indirectly involved in synapse plasticity of the hippocampus, via its role in HNK-1 biosynthesis. Sulfates terminal glucuronyl residue of the laminin globular (LG)-domain binding epitope on DAG1/alpha-dystroglycan and prevents further polymerization by LARGE1 glycosyltransferase. Likely defines the chain length of LG epitope, conferring binding specificity to extracellular matrix components. Plays a role in down-regulating the steroid hormones. Sulfates glucuronidated estrogens and androgens with an impact in hormone cycle and fertility. Has a preference for glucuronyl moiety at the 3-hydroxyl group of a sterol ring rather than the 17-hydroxyl group, showing high catalytic efficiency for 17beta-estradiol 3-O-(beta-D-glucuronate) and dehydroepiandrosterone 3-O-(beta-D-glucuronate) hormones. The polypeptide is Carbohydrate sulfotransferase 10 (Chst10) (Rattus norvegicus (Rat)).